We begin with the raw amino-acid sequence, 160 residues long: MSRRHAAEKRVILPDMKYNSILLSRFINNIMKEGKKALAEKIVYSAFNKIEKKHRVDPYQTFNNAMHNVKPHLEVTSVRVGGANYQVPTHVDERRGYALASRWIINAASKRSEKMMIDKLAEELFEASNNRGVAIKKKEDTHKMAEANKAFSHFSPKKMK.

This sequence belongs to the universal ribosomal protein uS7 family. As to quaternary structure, part of the 30S ribosomal subunit. Contacts proteins S9 and S11.

Its function is as follows. One of the primary rRNA binding proteins, it binds directly to 16S rRNA where it nucleates assembly of the head domain of the 30S subunit. Is located at the subunit interface close to the decoding center, probably blocks exit of the E-site tRNA. The polypeptide is Small ribosomal subunit protein uS7 (Rickettsia conorii (strain ATCC VR-613 / Malish 7)).